The chain runs to 374 residues: MSPDRTGRGSSSSSSSLKRLVCKSFVRAWGRRRPNLRRAVLLICTASAIYGIVIASQVLRGSTHPGKALRKAQQKVLTDASVRLAGTALEGNTFYMENAQPQGGSTSSSPVTLQPNVVYITLKTKRSKPANIRGTVRPKKRRKYGARRPGVVQDTESKKDTLWSKVPNSQHKSQAQSWIRGIDGHRGGRGTHQSNIRIYSDSAPPWFTKEDISAMRFLSDSRIGHIKQNLLLFESDQTPLMKMPVPPVGSGDCQGQCGVIKRPLDMSEVFAFHLDRVLGLNRTLPSVSRSLEFVQDGQPCPVILWDPSLLPTDNKTQSSIKLKWGTYQEMLRHKCWLNGKAPKADLGCTEIHHQEWCKMALFDFLLQVYTRLDR.

The Cytoplasmic portion of the chain corresponds to 1–38 (MSPDRTGRGSSSSSSSLKRLVCKSFVRAWGRRRPNLRR). The chain crosses the membrane as a helical; Signal-anchor for type II membrane protein span at residues 39–61 (AVLLICTASAIYGIVIASQVLRG). Over 62–374 (STHPGKALRK…LLQVYTRLDR (313 aa)) the chain is Extracellular. Over residues 136-146 (VRPKKRRKYGA) the composition is skewed to basic residues. Residues 136–177 (VRPKKRRKYGARRPGVVQDTESKKDTLWSKVPNSQHKSQAQS) form a disordered region. Residues 166 to 177 (VPNSQHKSQAQS) show a composition bias toward polar residues. N-linked (GlcNAc...) asparagine glycans are attached at residues Asn-281 and Asn-314.

It belongs to the GASK family.

The protein localises to the golgi apparatus membrane. This chain is Golgi-associated kinase 1B, found in Xenopus laevis (African clawed frog).